Reading from the N-terminus, the 408-residue chain is Argininosuccinate synthase (408 aa).

ATP-binding positions include 11 to 19 (AYSGGLDTS) and alanine 38. L-citrulline is bound by residues tyrosine 91 and serine 96. Glycine 121 is an ATP binding site. L-aspartate contacts are provided by threonine 123, asparagine 127, and aspartate 128. Residue asparagine 127 coordinates L-citrulline. Arginine 131, serine 182, serine 191, glutamate 267, and tyrosine 279 together coordinate L-citrulline.

This sequence belongs to the argininosuccinate synthase family. Type 1 subfamily. As to quaternary structure, homotetramer.

It is found in the cytoplasm. It carries out the reaction L-citrulline + L-aspartate + ATP = 2-(N(omega)-L-arginino)succinate + AMP + diphosphate + H(+). The protein operates within amino-acid biosynthesis; L-arginine biosynthesis; L-arginine from L-ornithine and carbamoyl phosphate: step 2/3. The chain is Argininosuccinate synthase from Azorhizobium caulinodans (strain ATCC 43989 / DSM 5975 / JCM 20966 / LMG 6465 / NBRC 14845 / NCIMB 13405 / ORS 571).